The sequence spans 242 residues: Uridylate kinase (242 aa).

16–19 contacts ATP; it reads KVSG. Gly58 contributes to the UMP binding site. ATP contacts are provided by Gly59 and Arg63. Residues Asp78 and 139-146 contribute to the UMP site; that span reads TGNPFCTT. ATP contacts are provided by Thr166, Gln167, Tyr172, and Asp175.

The protein belongs to the UMP kinase family. In terms of assembly, homohexamer.

The protein localises to the cytoplasm. The catalysed reaction is UMP + ATP = UDP + ADP. The protein operates within pyrimidine metabolism; CTP biosynthesis via de novo pathway; UDP from UMP (UMPK route): step 1/1. With respect to regulation, inhibited by UTP. Its function is as follows. Catalyzes the reversible phosphorylation of UMP to UDP. In Rickettsia conorii (strain ATCC VR-613 / Malish 7), this protein is Uridylate kinase.